The chain runs to 560 residues: Excitatory amino acid transporter 5 (560 aa).

Topologically, residues 1–16 (MVPHAILARGRDVCRR) are cytoplasmic. 3 consecutive transmembrane segments (helical) span residues 17–37 (NGLLILSVLSVIVGCLLGFFL), 60–80 (MLKMMILPLVVSSLMSGLASL), and 94–114 (AYYLWTTFMAVIVGIFMVSII). The Extracellular segment spans residues 115–216 (HPGSAAQKET…EVVYKSEPGT (102 aa)). N-linked (GlcNAc...) asparagine glycosylation occurs at N191. 7 consecutive transmembrane segments (helical) span residues 217-237 (SDGMNVLGIVFFSATMGIMLG), 260-280 (IVAVAVWYFPFGIVFLIAGKI), 300-320 (VVCGLVLHGLFILPLLYFFIT), 330-350 (GILQALLIALATSSSSATLPI), 372-392 (VGATINMDGTALYEAVAAIFI), 414-434 (AASIGAAGIPQAGLVTMVIVL), and 457-477 (FRTMINVLGDALAAGIMAHIC).

It belongs to the dicarboxylate/amino acid:cation symporter (DAACS) (TC 2.A.23) family. SLC1A7 subfamily. As to quaternary structure, interacts with the PDZ domains of DLG4. As to expression, expressed primarily in retina. Detectable in liver, heart, muscle and brain.

Its subcellular location is the photoreceptor inner segment membrane. It localises to the synaptic cell membrane. The enzyme catalyses K(+)(in) + L-glutamate(out) + 3 Na(+)(out) + H(+)(out) = K(+)(out) + L-glutamate(in) + 3 Na(+)(in) + H(+)(in). It carries out the reaction K(+)(in) + L-aspartate(out) + 3 Na(+)(out) + H(+)(out) = K(+)(out) + L-aspartate(in) + 3 Na(+)(in) + H(+)(in). It catalyses the reaction D-aspartate(out) + K(+)(in) + 3 Na(+)(out) + H(+)(out) = D-aspartate(in) + K(+)(out) + 3 Na(+)(in) + H(+)(in). Its function is as follows. Sodium-dependent, high-affinity amino acid transporter that mediates the uptake of L-glutamate and also L-aspartate and D-aspartate. Functions as a symporter that transports one amino acid molecule together with two or three Na(+) ions and one proton, in parallel with the counter-transport of one K(+) ion. Acts primarily as an inhibitory glutamate-gated chloride channel being a major inhibitory presynaptic receptor at mammalian rod bipolar cell axon terminals. Glutamate binding gates a large Cl(-) conductance that mediates inhibition, affecting visual processing in the retina. This is Excitatory amino acid transporter 5 from Homo sapiens (Human).